We begin with the raw amino-acid sequence, 529 residues long: Glucose-6-phosphate isomerase (529 aa).

E322 acts as the Proton donor in catalysis. Active-site residues include H351 and K455.

The protein belongs to the GPI family.

The protein resides in the cytoplasm. The enzyme catalyses alpha-D-glucose 6-phosphate = beta-D-fructose 6-phosphate. It functions in the pathway carbohydrate biosynthesis; gluconeogenesis. It participates in carbohydrate degradation; glycolysis; D-glyceraldehyde 3-phosphate and glycerone phosphate from D-glucose: step 2/4. Functionally, catalyzes the reversible isomerization of glucose-6-phosphate to fructose-6-phosphate. The chain is Glucose-6-phosphate isomerase from Cyanothece sp. (strain PCC 7425 / ATCC 29141).